The following is a 400-amino-acid chain: Dihydrolipoyllysine-residue succinyltransferase component of 2-oxoglutarate dehydrogenase complex (400 aa).

A Lipoyl-binding domain is found at 2–77 (GVKIIVPSLG…AVGEEIGDIN (76 aa)). Position 43 is an N6-lipoyllysine (K43). Residues 85–97 (NSNEAAKPQTASQ) show a composition bias toward polar residues. The tract at residues 85–113 (NSNEAAKPQTASQPVPEKVPKKPAVANNT) is disordered. A Peripheral subunit-binding (PSBD) domain is found at 113–150 (TLAPSVQKLVTENKLDPNNIKGTGKDGRITKGDVLETM). Catalysis depends on residues H371 and D375.

The protein belongs to the 2-oxoacid dehydrogenase family. In terms of assembly, forms a 24-polypeptide structural core with octahedral symmetry. Part of the 2-oxoglutarate dehydrogenase (OGDH) complex composed of E1 (2-oxoglutarate dehydrogenase), E2 (dihydrolipoamide succinyltransferase) and E3 (dihydrolipoamide dehydrogenase); the complex contains multiple copies of the three enzymatic components (E1, E2 and E3). Requires (R)-lipoate as cofactor.

The enzyme catalyses N(6)-[(R)-dihydrolipoyl]-L-lysyl-[protein] + succinyl-CoA = N(6)-[(R)-S(8)-succinyldihydrolipoyl]-L-lysyl-[protein] + CoA. It participates in amino-acid degradation; L-lysine degradation via saccharopine pathway; glutaryl-CoA from L-lysine: step 6/6. Functionally, E2 component of the 2-oxoglutarate dehydrogenase (OGDH) complex which catalyzes the second step in the conversion of 2-oxoglutarate to succinyl-CoA and CO(2). The protein is Dihydrolipoyllysine-residue succinyltransferase component of 2-oxoglutarate dehydrogenase complex (sucB) of Rickettsia bellii (strain RML369-C).